Here is a 327-residue protein sequence, read N- to C-terminus: Transcription factor bHLH48 (327 aa).

A disordered region spans residues glutamate 137–lysine 179. The bHLH domain maps to glutamine 191–leucine 241.

As to quaternary structure, homodimer. In terms of tissue distribution, expressed in leaves, stems, and flowers.

It localises to the nucleus. The sequence is that of Transcription factor bHLH48 (BHLH48) from Arabidopsis thaliana (Mouse-ear cress).